We begin with the raw amino-acid sequence, 549 residues long: Chaperonin GroEL (549 aa).

Residues 30–33, lysine 51, 87–91, glycine 415, 479–481, and aspartate 495 contribute to the ATP site; these read TLGP, DGTTT, and NAA.

The protein belongs to the chaperonin (HSP60) family. In terms of assembly, forms a cylinder of 14 subunits composed of two heptameric rings stacked back-to-back. Interacts with the co-chaperonin GroES.

It is found in the cytoplasm. The enzyme catalyses ATP + H2O + a folded polypeptide = ADP + phosphate + an unfolded polypeptide.. Functionally, together with its co-chaperonin GroES, plays an essential role in assisting protein folding. The GroEL-GroES system forms a nano-cage that allows encapsulation of the non-native substrate proteins and provides a physical environment optimized to promote and accelerate protein folding. The polypeptide is Chaperonin GroEL (Stenotrophomonas maltophilia (strain K279a)).